A 282-amino-acid polypeptide reads, in one-letter code: Shikimate dehydrogenase (NADP(+)) (282 aa).

Shikimate contacts are provided by residues Ser-18–Ser-20 and Thr-65. Catalysis depends on Lys-69, which acts as the Proton acceptor. Shikimate contacts are provided by Asn-90 and Asp-106. Residues Gly-134–Ala-138, Asn-158–Arg-163, and Ile-223 contribute to the NADP(+) site. Tyr-225 lines the shikimate pocket. An NADP(+)-binding site is contributed by Gly-246.

This sequence belongs to the shikimate dehydrogenase family. As to quaternary structure, homodimer.

The enzyme catalyses shikimate + NADP(+) = 3-dehydroshikimate + NADPH + H(+). It participates in metabolic intermediate biosynthesis; chorismate biosynthesis; chorismate from D-erythrose 4-phosphate and phosphoenolpyruvate: step 4/7. In terms of biological role, involved in the biosynthesis of the chorismate, which leads to the biosynthesis of aromatic amino acids. Catalyzes the reversible NADPH linked reduction of 3-dehydroshikimate (DHSA) to yield shikimate (SA). The chain is Shikimate dehydrogenase (NADP(+)) from Methylobacterium radiotolerans (strain ATCC 27329 / DSM 1819 / JCM 2831 / NBRC 15690 / NCIMB 10815 / 0-1).